We begin with the raw amino-acid sequence, 486 residues long: MAEFETIIGLEVHAQLNTESKIFSTSATKFGSPPNSQTNPVCLGLPGALPVLNESALEKAIMAGIAFGCDISLFTKFDRKNYFYPDLPKGYQISQFDKPICTGGGVTFTIKGEESSRYVRLTRIHMEEDAGKLIHSADPNIPQSYVDLNRAGTPLIEIVSEPDMRSSDEAYYYLNSLKSILKYIRVSDCNMEEGSLRCDANVSIRPKGSDKFGTRVEIKNLNSFKAVKAAIDYEVEWQTEMALEGKTFQQQTKLWDSVANKTVTMRTKEMSHDYRYFPDPDLPVIILQKETVESVRSKLPELPNERKNRFVEKLGLPKYDAEVLTAEREIADYFEDALKVSGDAKKTSNWVKDEVLGVVNKESITISEFSVSAQRIGGLVKLIADGKISGKIAKTVFEELLISDKDAETIVTEKNLIVVRDDKEIERIVNEAIANNQDAVAKYKSGKDRALGAIVGYVMKVSKGKADPELVNQMLLDKLGSLPPKE.

It belongs to the GatB/GatE family. GatB subfamily. Heterotrimer of A, B and C subunits.

The catalysed reaction is L-glutamyl-tRNA(Gln) + L-glutamine + ATP + H2O = L-glutaminyl-tRNA(Gln) + L-glutamate + ADP + phosphate + H(+). It catalyses the reaction L-aspartyl-tRNA(Asn) + L-glutamine + ATP + H2O = L-asparaginyl-tRNA(Asn) + L-glutamate + ADP + phosphate + 2 H(+). Functionally, allows the formation of correctly charged Asn-tRNA(Asn) or Gln-tRNA(Gln) through the transamidation of misacylated Asp-tRNA(Asn) or Glu-tRNA(Gln) in organisms which lack either or both of asparaginyl-tRNA or glutaminyl-tRNA synthetases. The reaction takes place in the presence of glutamine and ATP through an activated phospho-Asp-tRNA(Asn) or phospho-Glu-tRNA(Gln). This chain is Aspartyl/glutamyl-tRNA(Asn/Gln) amidotransferase subunit B, found in Leptospira borgpetersenii serovar Hardjo-bovis (strain L550).